We begin with the raw amino-acid sequence, 2812 residues long: Polyunsaturated fatty acid synthase subunit A (2812 aa).

Residues 12-472 (DTRIAVIGMS…GANYHAVLEE (461 aa)) enclose the Ketosynthase family 3 (KS3) domain. Catalysis depends on for beta-ketoacyl synthase activity residues cysteine 213, histidine 348, and histidine 390. The 312-residue stretch at 602–913 (LFSGQGAQYT…TVSVNPASGK (312 aa)) folds into the Malonyl-CoA:ACP transacylase (MAT) domain. A coiled-coil region spans residues 1000–1048 (DEEAKREAARLQKQLEDAQRQLDEAKRAADEANQKLAAAKEEAKSAAAS). Carrier domains follow at residues 1114 to 1193 (ALLA…KAEI), 1232 to 1308 (ERAE…KAEI), and 1342 to 1418 (AKAE…KAEI). An O-(pantetheine 4'-phosphoryl)serine mark is found at serine 1152, serine 1267, and serine 1377. Positions 1422-1442 (SAPAPAAAAPAPAAPAPAAAA) are disordered. Over residues 1423–1442 (APAPAAAAPAPAAPAPAAAA) the composition is skewed to low complexity. The Carrier 4 domain maps to 1455 to 1531 (AKAETVVMEV…EVVDAMKAEI (77 aa)). The residue at position 1490 (serine 1490) is an O-(pantetheine 4'-phosphoryl)serine. Residues 1535–1555 (SAPAPAAAAPAPAAPAPAAAA) are disordered. Over residues 1536–1555 (APAPAAAAPAPAAPAPAAAA) the composition is skewed to low complexity. 4 consecutive Carrier domains span residues 1568–1644 (AKAE…KAEI), 1681–1757 (AKAE…KAEI), 1792–1868 (AKAE…KAEI), and 1903–1979 (AKAE…KAEI). O-(pantetheine 4'-phosphoryl)serine occurs at positions 1603, 1716, 1827, and 1938. One can recognise a Ketoreductase (KR) domain in the interval 2257–2484 (VVSGGARGIT…VKSICFGPWD (228 aa)). Residues 2524–2651 (EILVGNWRTP…RAVVVLSSQG (128 aa)) are N-terminal hotdog fold. In terms of domain architecture, PKS/mFAS DH spans 2524–2812 (EILVGNWRTP…SVIATDSLAF (289 aa)). The interval 2540 to 2800 (ETITLHRKIS…NEQGDLFIDV (261 aa)) is dehydratase (DH) domain. Histidine 2559 serves as the catalytic Proton acceptor; for dehydratase activity. Positions 2666-2812 (ADPAAQSAVY…SVIATDSLAF (147 aa)) are C-terminal hotdog fold. Aspartate 2730 functions as the Proton donor; for dehydratase activity in the catalytic mechanism.

Component of the polyunsaturated fatty acid synthase complex composed of at least ORF-A, ORF-B and ORF-C. It depends on pantetheine 4'-phosphate as a cofactor.

The protein operates within lipid metabolism; fatty acid biosynthesis. Its function is as follows. Poliketide synthase-like protein; part of the polyunsaturated fatty acid synthase composed of the 3 PKS-like subunits A, B and C. While the saturated fatty acids (SFAs) in Thraustochytrium are produced by the conventional fatty acid synthase (FAS) pathway, polyunsaturated fatty acids (PUFAs) including docosahexeanoic acid (DHA) and docosapentaenoic acid (DPA) are synthesized via an anaerobical PKS pathway. PUFA synthase assimilates fatty acyl-CoA, the product of FAS, as the starter unit to synthesize DPA, and this starter unit may be butyryl-CoA, hexanoyl-CoA, or octanoyl-CoA. DPA and DHA biosynthesis seem to differ by the reduction at the N-3 position by PUFA synthase, not the extension of carbon chain. In DHA biosynthesis, PUFA synthase extends the fatty acyl chain from the methyl toward the carboxyl end, and the double bond is formed when the carbon chain is growing, instead of afterward. Therefore, PUFA synthase is unable to transform DPA to DHA, suggesting that DPA is not the precursor of DHA. Moreover, DPA molecule is partly extended by FAS KS domain, so DPA biosynthesis is less dependent on PUFA synthase KS domain than DHA. The polypeptide is Polyunsaturated fatty acid synthase subunit A (Thraustochytrium sp. (strain ATCC 26185 / S-3)).